Here is a 365-residue protein sequence, read N- to C-terminus: Alanine racemase (365 aa).

The Proton acceptor; specific for D-alanine role is filled by Lys-32. Lys-32 carries the N6-(pyridoxal phosphate)lysine modification. Arg-128 is a binding site for substrate. Tyr-257 functions as the Proton acceptor; specific for L-alanine in the catalytic mechanism. Met-305 lines the substrate pocket.

This sequence belongs to the alanine racemase family. Pyridoxal 5'-phosphate serves as cofactor.

The enzyme catalyses L-alanine = D-alanine. It functions in the pathway amino-acid biosynthesis; D-alanine biosynthesis; D-alanine from L-alanine: step 1/1. Catalyzes the interconversion of L-alanine and D-alanine. May also act on other amino acids. This is Alanine racemase (alr) from Francisella tularensis subsp. holarctica (strain OSU18).